A 200-amino-acid polypeptide reads, in one-letter code: LHFPL tetraspan subfamily member 6 protein (200 aa).

The first 23 residues, 1–23 (MASSLTCTGVIWALLSFLSAATS), serve as a signal peptide directing secretion. The next 3 membrane-spanning stretches (helical) occupy residues 84–104 (ICTI…LTAL), 123–143 (GIQF…PLGW), and 166–186 (IGWA…LCTW).

The protein belongs to the LHFP family.

The protein resides in the membrane. In Rattus norvegicus (Rat), this protein is LHFPL tetraspan subfamily member 6 protein.